The following is a 398-amino-acid chain: Candidapepsin-3 (398 aa).

An N-terminal signal peptide occupies residues methionine 1–alanine 18. The propeptide at threonine 19–arginine 58 is activation peptide. N-linked (GlcNAc...) asparagine glycosylation is present at asparagine 42. One can recognise a Peptidase A1 domain in the interval tyrosine 72–alanine 384. The active site involves aspartate 90. Position 90 to 92 (aspartate 90 to glycine 92) interacts with pepstatin A. Polar residues predominate over residues valine 103–aspartate 112. The disordered stretch occupies residues valine 103–isoleucine 139. An intrachain disulfide couples cysteine 105 to cysteine 116. Residues serine 123 to serine 138 are compositionally biased toward low complexity. Residues glutamate 140–aspartate 143 and aspartate 274–threonine 278 each bind pepstatin A. The active site involves aspartate 274. Cysteine 312 and cysteine 350 are oxidised to a cystine. The N-linked (GlcNAc...) asparagine glycan is linked to asparagine 313.

It belongs to the peptidase A1 family. Post-translationally, O-glycosylated.

Its subcellular location is the secreted. The enzyme catalyses Preferential cleavage at the carboxyl of hydrophobic amino acids, but fails to cleave 15-Leu-|-Tyr-16, 16-Tyr-|-Leu-17 and 24-Phe-|-Phe-25 of insulin B chain. Activates trypsinogen, and degrades keratin.. This Candida albicans (strain WO-1) (Yeast) protein is Candidapepsin-3 (SAP3).